The sequence spans 552 residues: Envelope glycoprotein E (552 aa).

The first 20 residues, 1–20 (MDRGAVVGFLLGVCVVSCLA), serve as a signal peptide directing secretion. The Virion surface segment spans residues 21-421 (GTPKTSWRRV…HAPPTHGALR (401 aa)). An interaction with gI region spans residues 63–88 (CGPLHPSWXSLMPPKQVPETVVDAAC). N124 is a glycosylation site (N-linked (GlcNAc...) asparagine; by host). A disordered region spans residues 162–216 (QPAPVPTPPPTPADYDEDDNDEGEGEDESLAGTPASGTPRLPPPPAPPRSWPSAP). Positions 164 to 173 (APVPTPPPTP) are enriched in pro residues. Residues 175 to 190 (DYDEDDNDEGEGEDES) show a composition bias toward acidic residues. Position 176 is a sulfotyrosine; by host (Y176). The span at 201-211 (RLPPPPAPPRS) shows a compositional bias: pro residues. The tract at residues 237 to 382 (SPGEAFSTNV…GHITISTAAX (146 aa)) is fc-binding. N245 is a glycosylation site (N-linked (GlcNAc...) asparagine; by host). Cystine bridges form between C273–C299, C282–C291, and C316–C325. The tract at residues 396–415 (GADLAEPTHPHVGAPPHAPP) is disordered. The segment covering 405-415 (PHVGAPPHAPP) has biased composition (low complexity). The helical transmembrane segment at 422–442 (LGAVMGAALLLSVLGLSVWAC) threads the bilayer. Residues 443–552 (MTCWRRRAWR…SQASDSSVFW (110 aa)) lie on the Intravirion side of the membrane. Short sequence motifs (internalization motif) lie at residues 465-468 (YIRV) and 474-477 (YADW). Residues 472–497 (ELYADWSSDSEGERDQVPWLAPPERP) are interaction with VP22 and UL11. Phosphoserine; by host CK2 occurs at positions 478 and 479. The interval 478 to 486 (SSDSEGERD) is acidic. Positions 478–552 (SSDSEGERDQ…SQASDSSVFW (75 aa)) are disordered. S505 carries the post-translational modification Phosphoserine. Polar residues predominate over residues 543-552 (SQASDSSVFW).

This sequence belongs to the alphaherpesvirinae glycoprotein E family. As to quaternary structure, interacts with gI; this interaction enhances the Fc receptor function of gE. The heterodimer gE/gI interacts with the Fc part of host IgG. Interacts (via C-terminus) with VP22 tegument protein; this interaction is necessary for the recruitment of VP22 to the Golgi and its packaging into virions. Interacts (via C-terminus) with UL11 tegument protein. Post-translationally, phosphorylated on serines within the acidic cluster. Phosphorylation determines whether endocytosed viral gE traffics to the trans-Golgi network or recycles to the cell membrane. N-glycosylated, and sulfated.

Its subcellular location is the virion membrane. The protein resides in the host cell membrane. The protein localises to the host cell junction. It localises to the host Golgi apparatus. It is found in the host trans-Golgi network. Functionally, in epithelial cells, the heterodimer gE/gI is required for the cell-to-cell spread of the virus, by sorting nascent virions to cell junctions. Once the virus reaches the cell junctions, virus particles can spread to adjacent cells extremely rapidly through interactions with cellular receptors that accumulate at these junctions. Implicated in basolateral spread in polarized cells. In neuronal cells, gE/gI is essential for the anterograde spread of the infection throughout the host nervous system. Together with US9, the heterodimer gE/gI is involved in the sorting and transport of viral structural components toward axon tips. The heterodimer gE/gI serves as a receptor for the Fc part of host IgG. Dissociation of gE/gI from IgG occurs at acidic pH. May thus be involved in anti-HSV antibodies bipolar bridging, followed by intracellular endocytosis and degradation, thereby interfering with host IgG-mediated immune responses. The polypeptide is Envelope glycoprotein E (gE) (Human herpesvirus 1 (strain F) (HHV-1)).